A 232-amino-acid chain; its full sequence is MSACQSPIIVALDFPTREAALALADQLDPKLCRVKVGKELFTSCAAGIVETLRGKGFEVFLDLKFHDIPNTTAMAVKAAAEMGVWMVNVHCSGGLRMMAACRETLEAFSGPRPLLIGVTVLTSMEREDLAGIGLDIEPQEQVLRLAALAQKAGMDGLVCSAQEAPALKAAHPGLQLVTPGIRPAGSAQDDQRRILTPRQALDAGSDYLVIGRPISQAADPAKALAAIVAELG.

Substrate contacts are provided by residues aspartate 13, lysine 35, 62–71 (DLKFHDIPNT), threonine 122, arginine 182, glutamine 191, glycine 211, and arginine 212. The active-site Proton donor is lysine 64.

It belongs to the OMP decarboxylase family. Type 1 subfamily. In terms of assembly, homodimer.

The enzyme catalyses orotidine 5'-phosphate + H(+) = UMP + CO2. It participates in pyrimidine metabolism; UMP biosynthesis via de novo pathway; UMP from orotate: step 2/2. Catalyzes the decarboxylation of orotidine 5'-monophosphate (OMP) to uridine 5'-monophosphate (UMP). In Pseudomonas aeruginosa (strain LESB58), this protein is Orotidine 5'-phosphate decarboxylase.